The chain runs to 460 residues: ATP synthase subunit beta (460 aa).

149 to 156 (GGAGVGKT) contacts ATP.

This sequence belongs to the ATPase alpha/beta chains family. In terms of assembly, F-type ATPases have 2 components, CF(1) - the catalytic core - and CF(0) - the membrane proton channel. CF(1) has five subunits: alpha(3), beta(3), gamma(1), delta(1), epsilon(1). CF(0) has three main subunits: a(1), b(2) and c(9-12). The alpha and beta chains form an alternating ring which encloses part of the gamma chain. CF(1) is attached to CF(0) by a central stalk formed by the gamma and epsilon chains, while a peripheral stalk is formed by the delta and b chains.

It is found in the cell inner membrane. The catalysed reaction is ATP + H2O + 4 H(+)(in) = ADP + phosphate + 5 H(+)(out). In terms of biological role, produces ATP from ADP in the presence of a proton gradient across the membrane. The catalytic sites are hosted primarily by the beta subunits. This chain is ATP synthase subunit beta, found in Nitrosomonas europaea (strain ATCC 19718 / CIP 103999 / KCTC 2705 / NBRC 14298).